The primary structure comprises 215 residues: 3-isopropylmalate dehydratase small subunit (215 aa).

This sequence belongs to the LeuD family. LeuD type 1 subfamily. In terms of assembly, heterodimer of LeuC and LeuD.

The enzyme catalyses (2R,3S)-3-isopropylmalate = (2S)-2-isopropylmalate. The protein operates within amino-acid biosynthesis; L-leucine biosynthesis; L-leucine from 3-methyl-2-oxobutanoate: step 2/4. Catalyzes the isomerization between 2-isopropylmalate and 3-isopropylmalate, via the formation of 2-isopropylmaleate. This is 3-isopropylmalate dehydratase small subunit from Chromohalobacter salexigens (strain ATCC BAA-138 / DSM 3043 / CIP 106854 / NCIMB 13768 / 1H11).